The sequence spans 221 residues: Large ribosomal subunit protein uL3 (221 aa).

Belongs to the universal ribosomal protein uL3 family. As to quaternary structure, part of the 50S ribosomal subunit. Forms a cluster with proteins L14 and L19.

Its function is as follows. One of the primary rRNA binding proteins, it binds directly near the 3'-end of the 23S rRNA, where it nucleates assembly of the 50S subunit. This chain is Large ribosomal subunit protein uL3, found in Chlamydia felis (strain Fe/C-56) (Chlamydophila felis).